An 81-amino-acid chain; its full sequence is Toxin MIT1 (81 aa).

Disulfide bonds link Cys7–Cys19, Cys13–Cys31, Cys18–Cys59, Cys41–Cys67, and Cys61–Cys77.

This sequence belongs to the AVIT (prokineticin) family. Expressed by the venom gland.

It localises to the secreted. In terms of biological role, potent agonist for both PKR1/PROKR1 and PKR2/PROKR2. Potently contracts gastrointestinal (GI) smooth muscle. In Dendroaspis polylepis polylepis (Black mamba), this protein is Toxin MIT1.